The primary structure comprises 290 residues: tRNA (adenine(58)-N(1))-methyltransferase catalytic subunit TRMT61A (290 aa).

An N-acetylserine modification is found at Ser2. Substrate stretches follow at residues 20–22 (LGH), 35–42 (QTQTRHGV), 64–65 (GW), 85–89 (QILYS), and 110–117 (SGTGSGSV). S-adenosyl-L-methionine is bound by residues Leu87, 114–116 (SGS), Glu135, Arg140, 163–164 (DV), and Asp181. Substrate stretches follow at residues 180 to 183 (LDIP) and 205 to 212 (SFSPCIEQ). Residue Thr279 participates in substrate binding.

The protein belongs to the class I-like SAM-binding methyltransferase superfamily. TRM61 family. Heterotetramer; composed of two copies of TRMT6 and two copies of TRMT61A.

It localises to the nucleus. It carries out the reaction adenosine(58) in tRNA + S-adenosyl-L-methionine = N(1)-methyladenosine(58) in tRNA + S-adenosyl-L-homocysteine + H(+). The catalysed reaction is an adenosine in mRNA + S-adenosyl-L-methionine = an N(1)-methyladenosine in mRNA + S-adenosyl-L-homocysteine + H(+). Catalytic subunit of tRNA (adenine-N(1)-)-methyltransferase, which catalyzes the formation of N(1)-methyladenine at position 58 (m1A58) in initiator methionyl-tRNA. Catalytic subunit of mRNA N(1)-methyltransferase complex, which mediates methylation of adenosine residues at the N(1) position of a small subset of mRNAs: N(1) methylation takes place in tRNA T-loop-like structures of mRNAs and is only present at low stoichiometries. The sequence is that of tRNA (adenine(58)-N(1))-methyltransferase catalytic subunit TRMT61A (Trmt61a) from Rattus norvegicus (Rat).